We begin with the raw amino-acid sequence, 428 residues long: Light-independent protochlorophyllide reductase subunit N (428 aa).

3 residues coordinate [4Fe-4S] cluster: C29, C54, and C115.

The protein belongs to the BchN/ChlN family. Protochlorophyllide reductase is composed of three subunits; BchL, BchN and BchB. Forms a heterotetramer of two BchB and two BchN subunits. It depends on [4Fe-4S] cluster as a cofactor.

It carries out the reaction chlorophyllide a + oxidized 2[4Fe-4S]-[ferredoxin] + 2 ADP + 2 phosphate = protochlorophyllide a + reduced 2[4Fe-4S]-[ferredoxin] + 2 ATP + 2 H2O. The protein operates within porphyrin-containing compound metabolism; bacteriochlorophyll biosynthesis (light-independent). Component of the dark-operative protochlorophyllide reductase (DPOR) that uses Mg-ATP and reduced ferredoxin to reduce ring D of protochlorophyllide (Pchlide) to form chlorophyllide a (Chlide). This reaction is light-independent. The NB-protein (BchN-BchB) is the catalytic component of the complex. This chain is Light-independent protochlorophyllide reductase subunit N, found in Cereibacter sphaeroides (strain KD131 / KCTC 12085) (Rhodobacter sphaeroides).